The sequence spans 92 residues: MARVTVEDAVNKIGNRFDMILVAARRARQIAVQGKEPMVDEMNDKPTVVALREIELGLVTSNTLDADERQTVREREAAEIAAVAAIAEGRVL.

It belongs to the RNA polymerase subunit omega family. In terms of assembly, the RNAP catalytic core consists of 2 alpha, 1 beta, 1 beta' and 1 omega subunit. When a sigma factor is associated with the core the holoenzyme is formed, which can initiate transcription.

The enzyme catalyses RNA(n) + a ribonucleoside 5'-triphosphate = RNA(n+1) + diphosphate. Promotes RNA polymerase assembly. Latches the N- and C-terminal regions of the beta' subunit thereby facilitating its interaction with the beta and alpha subunits. This chain is DNA-directed RNA polymerase subunit omega, found in Shewanella frigidimarina (strain NCIMB 400).